We begin with the raw amino-acid sequence, 126 residues long: Fumarate reductase subunit C (126 aa).

Transmembrane regions (helical) follow at residues 30–50 (IFVA…GAGG), 64–84 (VVVV…VTWF), and 105–125 (VLAG…WMVL).

The protein belongs to the FrdC family. Part of an enzyme complex containing four subunits: a flavoprotein (FrdA), an iron-sulfur protein (FrdB), and two hydrophobic anchor proteins (FrdC and FrdD).

The protein resides in the cell membrane. Anchors the catalytic components of the fumarate reductase complex to the cell membrane, binds quinones. In Mycobacterium tuberculosis (strain CDC 1551 / Oshkosh), this protein is Fumarate reductase subunit C.